The primary structure comprises 376 residues: MVKNYDSVEFPYCDEVSKYERLAKIGQGTFGEVFKAKHRQTGKKVALKKVLMENEKEGFPITALREIKILQLLKHENVVHLIEICRNKISPTANQYNRCKGTIFLVFDFCEHDLAGLLSNAHVKFTVAEIKKVMQMLLNGLYYIHRNKILHRDMKAANVLITRDGVLKLADFGLARAFSLAKNSQPNKYTNRVVTLWYRPPELLLGERDYGPPIDLWGAGCIMAEMWTRSPIMQGNTEQHQLTLISQLCGSITPEVWPNVDKYELYQKLELPKGQKRKVKERLKAYVKDVCALDLIDKLLILDPAQRTDSDEALNHDFFWSDPMPSDLKNMLSTHNQSMFEYLAPPRRRGGHMPQQPANQARNPAATNQSEFDRVF.

Positions 19-319 (YERLAKIGQG…SDEALNHDFF (301 aa)) constitute a Protein kinase domain. Residues 25 to 33 (IGQGTFGEV) and Lys48 each bind ATP. Asp153 serves as the catalytic Proton acceptor. The segment at 345–376 (PPRRRGGHMPQQPANQARNPAATNQSEFDRVF) is disordered. Low complexity predominate over residues 354-369 (PQQPANQARNPAATNQ).

This sequence belongs to the protein kinase superfamily. CMGC Ser/Thr protein kinase family. CDC2/CDKX subfamily. In terms of assembly, associates with cyclin-T to form P-TEFb.

It is found in the nucleus. It catalyses the reaction L-seryl-[protein] + ATP = O-phospho-L-seryl-[protein] + ADP + H(+). The catalysed reaction is L-threonyl-[protein] + ATP = O-phospho-L-threonyl-[protein] + ADP + H(+). The enzyme catalyses [DNA-directed RNA polymerase] + ATP = phospho-[DNA-directed RNA polymerase] + ADP + H(+). Functionally, member of the cyclin-dependent kinase pair (CDK9/cyclin-T) complex, also called positive transcription elongation factor B (P-TEFb), which is proposed to facilitate the transition from abortive to production elongation by phosphorylating the CTD (C-terminal domain) of the large subunit of RNA polymerase II (RNAP II) and SUPT5H. This Xenopus laevis (African clawed frog) protein is Cyclin-dependent kinase 9-B (cdk9-b).